The sequence spans 416 residues: Alpha-1,3/1,6-mannosyltransferase ALG2 (416 aa).

Over 1–84 (MAEEQGRERD…LPRGLGWGGR (84 aa)) the chain is Cytoplasmic. The segment at residues 85–105 (GAAVCAYVRMVFLALYVLFLA) is an intramembrane region (helical). Residues 106–416 (DEEFDVVVCD…LYRYVTKLLV (311 aa)) lie on the Cytoplasmic side of the membrane.

The protein belongs to the glycosyltransferase group 1 family. Glycosyltransferase 4 subfamily.

It is found in the endoplasmic reticulum membrane. It catalyses the reaction a beta-D-Man-(1-&gt;4)-beta-D-GlcNAc-(1-&gt;4)-alpha-D-GlcNAc-diphospho-di-trans,poly-cis-dolichol + GDP-alpha-D-mannose = an alpha-D-Man-(1-&gt;3)-beta-D-Man-(1-&gt;4)-beta-D-GlcNAc-(1-&gt;4)-alpha-D-GlcNAc-diphospho-di-trans,poly-cis-dolichol + GDP + H(+). The catalysed reaction is an alpha-D-Man-(1-&gt;3)-beta-D-Man-(1-&gt;4)-beta-D-GlcNAc-(1-&gt;4)-alpha-D-GlcNAc-diphospho-di-trans,poly-cis-dolichol + GDP-alpha-D-mannose = an alpha-D-Man-(1-&gt;3)-[alpha-D-Man-(1-&gt;6)]-beta-D-Man-(1-&gt;4)-beta-D-GlcNAc-(1-&gt;4)-alpha-D-GlcNAc-diphospho-di-trans,poly-cis-dolichol + GDP + H(+). It carries out the reaction a beta-D-Man-(1-&gt;4)-beta-D-GlcNAc-(1-&gt;4)-alpha-D-GlcNAc-diphospho-di-trans,poly-cis-dolichol + GDP-alpha-D-mannose = an alpha-D-Man-(1-&gt;6)-beta-D-Man-(1-&gt;4)-beta-D-GlcNAc-(1-&gt;4)-alpha-D-GlcNAc-diphospho-di-trans,poly-cis-dolichol + GDP + H(+). The enzyme catalyses an alpha-D-Man-(1-&gt;6)-beta-D-Man-(1-&gt;4)-beta-D-GlcNAc-(1-&gt;4)-alpha-D-GlcNAc-diphospho-di-trans,poly-cis-dolichol + GDP-alpha-D-mannose = an alpha-D-Man-(1-&gt;3)-[alpha-D-Man-(1-&gt;6)]-beta-D-Man-(1-&gt;4)-beta-D-GlcNAc-(1-&gt;4)-alpha-D-GlcNAc-diphospho-di-trans,poly-cis-dolichol + GDP + H(+). It functions in the pathway protein modification; protein glycosylation. Functionally, mannosyltransferase that operates in the biosynthetic pathway of dolichol-linked oligosaccharides, the glycan precursors employed in protein asparagine (N)-glycosylation. The assembly of dolichol-linked oligosaccharides begins on the cytosolic side of the endoplasmic reticulum membrane and finishes in its lumen. The sequential addition of sugars to dolichol pyrophosphate produces dolichol-linked oligosaccharides containing fourteen sugars, including two GlcNAcs, nine mannoses and three glucoses. Once assembled, the oligosaccharide is transferred from the lipid to nascent proteins by oligosaccharyltransferases. Catalyzes, on the cytoplasmic face of the endoplasmic reticulum, the addition of the second and third mannose residues to the dolichol-linked oligosaccharide chain, to produce Man3GlcNAc(2)-PP-dolichol core oligosaccharide. Man3GlcNAc(2)-PP-dolichol is a substrate for ALG11, the following enzyme in the biosynthetic pathway. While both alpha 1,3 and alpha 1,6 linkages are possible, the sequential addition of alpha 1,3 followed by alpha 1,6 is probably the preferred route. The sequence is that of Alpha-1,3/1,6-mannosyltransferase ALG2 (ALG2) from Homo sapiens (Human).